We begin with the raw amino-acid sequence, 63 residues long: Sperm protamine P1 (63 aa).

The disordered stretch occupies residues 1–63 (MARYRRHSRS…RYSRRGRRRY (63 aa)).

The protein belongs to the protamine P1 family. Testis.

The protein localises to the nucleus. It localises to the chromosome. Its function is as follows. Protamines substitute for histones in the chromatin of sperm during the haploid phase of spermatogenesis. They compact sperm DNA into a highly condensed, stable and inactive complex. In Sminthopsis bindi (Kakadu dunnart), this protein is Sperm protamine P1 (PRM1).